Here is a 176-residue protein sequence, read N- to C-terminus: Large ribosomal subunit protein uL6 (176 aa).

The span at 151-170 (RPPEPYKGKGVRYADEQVRR) shows a compositional bias: basic and acidic residues. The tract at residues 151 to 176 (RPPEPYKGKGVRYADEQVRRKEAKKK) is disordered.

The protein belongs to the universal ribosomal protein uL6 family. In terms of assembly, part of the 50S ribosomal subunit.

This protein binds to the 23S rRNA, and is important in its secondary structure. It is located near the subunit interface in the base of the L7/L12 stalk, and near the tRNA binding site of the peptidyltransferase center. This chain is Large ribosomal subunit protein uL6, found in Shewanella pealeana (strain ATCC 700345 / ANG-SQ1).